We begin with the raw amino-acid sequence, 99 residues long: Malonate decarboxylase acyl carrier protein (99 aa).

Residue Ser25 is modified to O-(phosphoribosyl dephospho-coenzyme A)serine.

The protein belongs to the MdcC family. In terms of processing, covalently binds the prosthetic group of malonate decarboxylase.

It is found in the cytoplasm. Functionally, subunit of malonate decarboxylase, it is an acyl carrier protein to which acetyl and malonyl thioester residues are bound via a 2'-(5''-phosphoribosyl)-3'-dephospho-CoA prosthetic group and turn over during the catalytic mechanism. The chain is Malonate decarboxylase acyl carrier protein from Pseudomonas putida (strain GB-1).